A 157-amino-acid polypeptide reads, in one-letter code: 2-C-methyl-D-erythritol 2,4-cyclodiphosphate synthase (157 aa).

Residues Asp-8 and His-10 each contribute to the a divalent metal cation site. 4-CDP-2-C-methyl-D-erythritol 2-phosphate contacts are provided by residues 8 to 10 (DVH) and 34 to 35 (HS). Position 42 (His-42) interacts with a divalent metal cation. 4-CDP-2-C-methyl-D-erythritol 2-phosphate-binding positions include 56–58 (DIG), 61–65 (FPDTD), 132–135 (TTEE), and Phe-139.

The protein belongs to the IspF family. In terms of assembly, homotrimer. It depends on a divalent metal cation as a cofactor.

It catalyses the reaction 4-CDP-2-C-methyl-D-erythritol 2-phosphate = 2-C-methyl-D-erythritol 2,4-cyclic diphosphate + CMP. The protein operates within isoprenoid biosynthesis; isopentenyl diphosphate biosynthesis via DXP pathway; isopentenyl diphosphate from 1-deoxy-D-xylulose 5-phosphate: step 4/6. Its function is as follows. Involved in the biosynthesis of isopentenyl diphosphate (IPP) and dimethylallyl diphosphate (DMAPP), two major building blocks of isoprenoid compounds. Catalyzes the conversion of 4-diphosphocytidyl-2-C-methyl-D-erythritol 2-phosphate (CDP-ME2P) to 2-C-methyl-D-erythritol 2,4-cyclodiphosphate (ME-CPP) with a corresponding release of cytidine 5-monophosphate (CMP). The chain is 2-C-methyl-D-erythritol 2,4-cyclodiphosphate synthase from Clostridium botulinum (strain Eklund 17B / Type B).